The primary structure comprises 717 residues: Scinderin (717 aa).

The interval 1 to 363 (MAPERHPPAF…DGFGKVYVTE (363 aa)) is actin-severing. Residues 28-108 (ELVPVPPSRH…IQGYESNEFV (81 aa)) form a Gelsolin-like 1 repeat. A 1,2-diacyl-sn-glycero-3-phospho-(1D-myo-inositol-4,5-bisphosphate)-binding positions include 112-119 (KGGIKYKA) and 138-146 (RLLHIKGRR). Gelsolin-like repeat units lie at residues 148–220 (VRAT…PDEL), 265–340 (VVAE…TPIF), 408–483 (RVPV…PHLL), 526–590 (AEVD…EEFW), and 628–703 (IEEV…PPTF). The ca(2+)-dependent actin binding stretch occupies residues 364–715 (RVAKIEQIEF…WFLAWDSNKW (352 aa)). Asn-538, Asp-539, Glu-562, Asp-643, Asp-644, and Glu-666 together coordinate Ca(2+).

The protein belongs to the villin/gelsolin family.

It is found in the cytoplasm. The protein resides in the cytoskeleton. The protein localises to the cell projection. It localises to the podosome. Functionally, ca(2+)-dependent actin filament-severing protein that has a regulatory function in exocytosis by affecting the organization of the microfilament network underneath the plasma membrane. In vitro, also has barbed end capping and nucleating activities in the presence of Ca(2+). Severing activity is inhibited by phosphatidylinositol 4,5-bis-phosphate (PIP2). Required for megakaryocyte differentiation, maturation, polyploidization and apoptosis with the release of platelet-like particles. Plays a role in osteoclastogenesis (OCG) and actin cytoskeletal organization in osteoclasts. Regulates chondrocyte proliferation and differentiation. Inhibits cell proliferation and tumorigenesis. Signaling is mediated by MAPK, p38 and JNK pathways. The sequence is that of Scinderin (SCIN) from Gallus gallus (Chicken).